The primary structure comprises 32 residues: Photosystem I reaction center subunit XII (32 aa).

A helical transmembrane segment spans residues 3-23 (SISDGQIVVALISAFIIVILA).

This sequence belongs to the PsaM family.

It localises to the plastid. Its subcellular location is the chloroplast thylakoid membrane. This Anthoceros angustus (Hornwort) protein is Photosystem I reaction center subunit XII.